The sequence spans 940 residues: MSDYKSTLNLPETEFPMRGNLANREPEMLKSWNENGLYQQIRESRKDAKPFILHDGPPYANGDIHIGHSVNKILKDIIIKSKTMSGFDAPYIPGWDCHGLPIELKVEQKVGKPGHKVTAAEFRQKCREYAAKQVDGQREDFIRLGVFADWQNPYLTMDFSTEANIVRSLSKVIENGHLHKGVKPVHWCTDCGSALAEAEVEYEDKMSPAIDVAFTAVDKSALLAKFGLADYAHNISMVIWTTTPWTLPANRALAVAANVEYTLVEMVKDGQTQALVLATDLYESCIERFGAESHTVLGTVAGSDLELLRFNHPFYDFDVPVILGDHVTVDSGTGVVHTAPGHGQDDFVVGQKYGLEVANPVGDNGVYKPDTEIFAGLHVFKANKNVVELLEEKGALLSHVQIKHSYPHCWRHKTPIIFRATPQWFISMDQKGLRTQAISEIEQTKWIPDWGQSRIEKMVENRPDWCISRQRTWGVPITLFVHRETEELHPDSVSLMERVAARIEQQGIQAWWDLDASELLGDEADQYRKVTDTLDVWYDSGSTFSTVVAARPEFHGHDIDLYLEGSDQHRGWFMSSLMISTAMNGKAPYKQVLTHGFTVDGQGRKMSKSVGNVISPQHVTNKLGADILRLWVAATDYSGEMTVSDQILNRSADAYRRIRNTARFLLANINGFDPVSDMVAIEDMVALDRWVVRRAAALQQELLEAYDEYNFHLVTQKLMQFCSVELGSFYLDIIKDRQYTAKGDSNARRSCQSALYLISEAMVRWIAPILSFTADEIWKLLPGERGEYVFTETWYEGLKSITLESDLSDEYWDQLLAVRAEVNKVIENARREKQIGGSLEAEVTLFADDALSAVLEKLGDELRFVLLTSKTEVVALAAAPSDAIGTELASLKLSLKKSEAEKCERCWHHREDVGTVTEHPTLCVRCVTNIEGDGEVRQFA.

The short motif at 58 to 68 (PYANGDIHIGH) is the 'HIGH' region element. An L-isoleucyl-5'-AMP-binding site is contributed by E564. The short motif at 605–609 (KMSKS) is the 'KMSKS' region element. K608 provides a ligand contact to ATP. The Zn(2+) site is built by C903, C906, C923, and C926.

The protein belongs to the class-I aminoacyl-tRNA synthetase family. IleS type 1 subfamily. Monomer. It depends on Zn(2+) as a cofactor.

The protein resides in the cytoplasm. It carries out the reaction tRNA(Ile) + L-isoleucine + ATP = L-isoleucyl-tRNA(Ile) + AMP + diphosphate. Functionally, catalyzes the attachment of isoleucine to tRNA(Ile). As IleRS can inadvertently accommodate and process structurally similar amino acids such as valine, to avoid such errors it has two additional distinct tRNA(Ile)-dependent editing activities. One activity is designated as 'pretransfer' editing and involves the hydrolysis of activated Val-AMP. The other activity is designated 'posttransfer' editing and involves deacylation of mischarged Val-tRNA(Ile). The chain is Isoleucine--tRNA ligase from Shewanella halifaxensis (strain HAW-EB4).